The sequence spans 297 residues: 4-hydroxy-tetrahydrodipicolinate synthase (297 aa).

Threonine 45 serves as a coordination point for pyruvate. Tyrosine 133 serves as the catalytic Proton donor/acceptor. The active-site Schiff-base intermediate with substrate is lysine 161. Isoleucine 203 is a binding site for pyruvate.

Belongs to the DapA family. As to quaternary structure, homotetramer; dimer of dimers.

The protein localises to the cytoplasm. It carries out the reaction L-aspartate 4-semialdehyde + pyruvate = (2S,4S)-4-hydroxy-2,3,4,5-tetrahydrodipicolinate + H2O + H(+). The protein operates within amino-acid biosynthesis; L-lysine biosynthesis via DAP pathway; (S)-tetrahydrodipicolinate from L-aspartate: step 3/4. Functionally, catalyzes the condensation of (S)-aspartate-beta-semialdehyde [(S)-ASA] and pyruvate to 4-hydroxy-tetrahydrodipicolinate (HTPA). The sequence is that of 4-hydroxy-tetrahydrodipicolinate synthase from Buchnera aphidicola subsp. Cinara cedri (strain Cc).